Consider the following 135-residue polypeptide: Aspartate 1-decarboxylase (135 aa).

The active-site Schiff-base intermediate with substrate; via pyruvic acid is the serine 25. Position 25 is a pyruvic acid (Ser) (serine 25). Threonine 57 serves as a coordination point for substrate. Tyrosine 58 serves as the catalytic Proton donor. 73–75 is a substrate binding site; sequence GSA.

This sequence belongs to the PanD family. Heterooctamer of four alpha and four beta subunits. The cofactor is pyruvate. Post-translationally, is synthesized initially as an inactive proenzyme, which is activated by self-cleavage at a specific serine bond to produce a beta-subunit with a hydroxyl group at its C-terminus and an alpha-subunit with a pyruvoyl group at its N-terminus.

It localises to the cytoplasm. It carries out the reaction L-aspartate + H(+) = beta-alanine + CO2. Its pathway is cofactor biosynthesis; (R)-pantothenate biosynthesis; beta-alanine from L-aspartate: step 1/1. In terms of biological role, catalyzes the pyruvoyl-dependent decarboxylation of aspartate to produce beta-alanine. This is Aspartate 1-decarboxylase from Albidiferax ferrireducens (strain ATCC BAA-621 / DSM 15236 / T118) (Rhodoferax ferrireducens).